Here is a 304-residue protein sequence, read N- to C-terminus: N-acetyl-D-glucosamine kinase (304 aa).

ATP-binding positions include 4 to 11 (GFDMGGTK) and 133 to 140 (GLGGGLVI). His-157, Cys-177, Cys-179, and Cys-184 together coordinate Zn(2+).

Belongs to the ROK (NagC/XylR) family. NagK subfamily.

The enzyme catalyses N-acetyl-D-glucosamine + ATP = N-acetyl-D-glucosamine 6-phosphate + ADP + H(+). Its pathway is cell wall biogenesis; peptidoglycan recycling. Functionally, catalyzes the phosphorylation of N-acetyl-D-glucosamine (GlcNAc) derived from cell-wall degradation, yielding GlcNAc-6-P. This is N-acetyl-D-glucosamine kinase from Pectobacterium carotovorum subsp. carotovorum (strain PC1).